Reading from the N-terminus, the 141-residue chain is Cystatin-SN (141 aa).

The signal sequence occupies residues 1–20; that stretch reads MAQYLSTLLLLLATLAVALA. The Secondary area of contact signature appears at 76 to 80; it reads QTVGG. Intrachain disulfides connect cysteine 94/cysteine 104 and cysteine 118/cysteine 138.

It belongs to the cystatin family. In terms of tissue distribution, expressed in submandibular and sublingual saliva but not in parotid saliva (at protein level). Expressed in saliva, tears, urine and seminal fluid.

It localises to the secreted. In terms of biological role, human saliva appears to contain several cysteine proteinase inhibitors that are immunologically related to cystatin S but that differ in their specificity due to amino acid sequence differences. Cystatin SN, with a pI of 7.5, is a much better inhibitor of papain and dipeptidyl peptidase I than is cystatin S, although both inhibit ficin equally well. The polypeptide is Cystatin-SN (CST1) (Homo sapiens (Human)).